Reading from the N-terminus, the 309-residue chain is MLGKGGKRKFDEHEDGLEGKIVSPSDGPSRVSYTLQRQTIFNISLMKLYNHRPLTEPSLQKTVLINNMLRRIQEELKQEGSLRPAFTPSSQPSNSLSDSYQEAPPPAPHPCDLGSTTPLEACLTPASLLEDDNDDTFCTLQAVHPAAPTRLSSAALPAEKDSFSSALDEIEELCPTSTSTEAAHTAAPEGPKGTSSESSVQKPEGPEEGRTDDSRFMDSLPGNFEITTSTGFLTDLTLDDILFADIDTSMYDFDPCTSASGTASKMAPVSADDLLKTLAPYSNQPVAPSQPFKMDLTELDHIMEVLVGS.

Disordered stretches follow at residues 1–30, 79–114, and 175–220; these read MLGKGGKRKFDEHEDGLEGKIVSPSDGPSR, EGSLRPAFTPSSQPSNSLSDSYQEAPPPAPHPCDLG, and PTST…MDSL. Over residues 8–18 the composition is skewed to basic and acidic residues; it reads RKFDEHEDGLE. An SERTA domain is found at 33–80; the sequence is YTLQRQTIFNISLMKLYNHRPLTEPSLQKTVLINNMLRRIQEELKQEG. Composition is skewed to low complexity over residues 89–99 and 175–189; these read SSQPSNSLSDS and PTSTSTEAAHTAAPE. The segment covering 204–216 has biased composition (basic and acidic residues); sequence EGPEEGRTDDSRF. The required for transactivation activity stretch occupies residues 230–306; it reads TGFLTDLTLD…TELDHIMEVL (77 aa). The Nuclear export signal (NES) motif lies at 233-238; sequence LTDLTL.

In terms of assembly, interacts with XPO1; which mediates nuclear export. Interacts with TFDP1; modulates transactivation activity of TFDP1/E2F complexes. In terms of processing, polyubiquitinated, which promotes proteasomal degradation. Expressed in white and brown adipose tissue.

The protein localises to the nucleus. The protein resides in the cytoplasm. Acts at E2F-responsive promoters as coregulator to integrate signals provided by PHD- and/or bromodomain-containing transcription factors. May act as coactivator as well as corepressor of E2F1-TFDP1 and E2F4-TFDP1 complexes on E2F consensus binding sites, which would activate or inhibit E2F-target genes expression. Modulates fat storage by down-regulating the expression of key genes involved in adipocyte lipolysis, thermogenesis and oxidative metabolism. The sequence is that of SERTA domain-containing protein 2 (Sertad2) from Mus musculus (Mouse).